The primary structure comprises 588 residues: Adenine deaminase (588 aa).

It belongs to the metallo-dependent hydrolases superfamily. Adenine deaminase family. As to quaternary structure, homodimer. Mn(2+) is required as a cofactor.

It catalyses the reaction adenine + H2O + H(+) = hypoxanthine + NH4(+). In Escherichia coli O17:K52:H18 (strain UMN026 / ExPEC), this protein is Adenine deaminase.